Here is a 415-residue protein sequence, read N- to C-terminus: Serine--tRNA ligase (415 aa).

231 to 233 contributes to the L-serine binding site; sequence TAE. 262–264 is an ATP binding site; it reads RSE. E285 lines the L-serine pocket. 349 to 352 provides a ligand contact to ATP; it reads EISS. S383 contacts L-serine.

This sequence belongs to the class-II aminoacyl-tRNA synthetase family. Type-1 seryl-tRNA synthetase subfamily. Homodimer. The tRNA molecule binds across the dimer.

It localises to the cytoplasm. The enzyme catalyses tRNA(Ser) + L-serine + ATP = L-seryl-tRNA(Ser) + AMP + diphosphate + H(+). The catalysed reaction is tRNA(Sec) + L-serine + ATP = L-seryl-tRNA(Sec) + AMP + diphosphate + H(+). It participates in aminoacyl-tRNA biosynthesis; selenocysteinyl-tRNA(Sec) biosynthesis; L-seryl-tRNA(Sec) from L-serine and tRNA(Sec): step 1/1. In terms of biological role, catalyzes the attachment of serine to tRNA(Ser). Is also able to aminoacylate tRNA(Sec) with serine, to form the misacylated tRNA L-seryl-tRNA(Sec), which will be further converted into selenocysteinyl-tRNA(Sec). The chain is Serine--tRNA ligase from Helicobacter pylori (strain G27).